A 246-amino-acid polypeptide reads, in one-letter code: Dihydroorotate dehydrogenase B (NAD(+)), electron transfer subunit (246 aa).

In terms of domain architecture, FAD-binding FR-type spans 3-97; the sequence is EKYTVEKVYE…TGPLGNGFNV (95 aa). Residues 50 to 53 and 72 to 73 each bind FAD; these read RPIS and GT. Residues Cys211, Cys216, Cys219, and Cys231 each contribute to the [2Fe-2S] cluster site.

Belongs to the PyrK family. Heterotetramer of 2 PyrK and 2 PyrD type B subunits. [2Fe-2S] cluster serves as cofactor. It depends on FAD as a cofactor.

It participates in pyrimidine metabolism; UMP biosynthesis via de novo pathway; orotate from (S)-dihydroorotate (NAD(+) route): step 1/1. Functionally, responsible for channeling the electrons from the oxidation of dihydroorotate from the FMN redox center in the PyrD type B subunit to the ultimate electron acceptor NAD(+). The protein is Dihydroorotate dehydrogenase B (NAD(+)), electron transfer subunit of Clostridium acetobutylicum (strain ATCC 824 / DSM 792 / JCM 1419 / IAM 19013 / LMG 5710 / NBRC 13948 / NRRL B-527 / VKM B-1787 / 2291 / W).